We begin with the raw amino-acid sequence, 257 residues long: DNA repair protein RecO (257 aa).

Belongs to the RecO family.

In terms of biological role, involved in DNA repair and RecF pathway recombination. The chain is DNA repair protein RecO from Streptococcus sanguinis (strain SK36).